We begin with the raw amino-acid sequence, 600 residues long: Chaperone protein DnaK (600 aa).

The residue at position 175 (Thr175) is a Phosphothreonine; by autocatalysis. A compositionally biased stretch (low complexity) spans 569 to 578; sequence SFAQATAQQA. Positions 569 to 600 are disordered; sequence SFAQATAQQANTSESDPKADDSNTIDAEIKQD. The span at 583–600 shows a compositional bias: basic and acidic residues; that stretch reads SDPKADDSNTIDAEIKQD.

This sequence belongs to the heat shock protein 70 family.

In terms of biological role, acts as a chaperone. In Mesomycoplasma hyopneumoniae (strain J / ATCC 25934 / NCTC 10110) (Mycoplasma hyopneumoniae), this protein is Chaperone protein DnaK.